The chain runs to 545 residues: Chaperonin GroEL 1 (545 aa).

ATP contacts are provided by residues 30–33 (TLGP), K51, 87–91 (DGTTT), G415, and D495.

Belongs to the chaperonin (HSP60) family. In terms of assembly, forms a cylinder of 14 subunits composed of two heptameric rings stacked back-to-back. Interacts with the co-chaperonin GroES.

The protein resides in the cytoplasm. The catalysed reaction is ATP + H2O + a folded polypeptide = ADP + phosphate + an unfolded polypeptide.. Functionally, together with its co-chaperonin GroES, plays an essential role in assisting protein folding. The GroEL-GroES system forms a nano-cage that allows encapsulation of the non-native substrate proteins and provides a physical environment optimized to promote and accelerate protein folding. The protein is Chaperonin GroEL 1 of Rhizobium meliloti (strain 1021) (Ensifer meliloti).